The chain runs to 318 residues: Large ribosomal subunit protein uL10 (318 aa).

Y24 carries the phosphotyrosine modification. T59 carries the phosphothreonine modification. K264 participates in a covalent cross-link: Glycyl lysine isopeptide (Lys-Gly) (interchain with G-Cter in ubiquitin). K298 participates in a covalent cross-link: Glycyl lysine isopeptide (Lys-Gly) (interchain with G-Cter in SUMO1); alternate. K298 participates in a covalent cross-link: Glycyl lysine isopeptide (Lys-Gly) (interchain with G-Cter in SUMO2); alternate. Positions 298-318 (KVEAKEESEESDEDMGFGLFD) are disordered. Residues 303 to 312 (EESEESDEDM) show a composition bias toward acidic residues. Residues S305 and S308 each carry the phosphoserine modification.

The protein belongs to the universal ribosomal protein uL10 family. P0 forms a pentameric complex by interaction with dimers of P1 and P2. Identified in a IGF2BP1-dependent mRNP granule complex containing untranslated mRNAs. Interacts with APEX1. Interacts with FMR1 isoform 6. Post-translationally, ubiquitinated at Lys-264 by RNF14 and RNF25 in response to ribosome collisions (ribosome stalling).

Its subcellular location is the nucleus. It is found in the cytoplasm. Its function is as follows. Ribosomal protein P0 is the functional equivalent of E.coli protein L10. The chain is Large ribosomal subunit protein uL10 (RPLP0) from Oryctolagus cuniculus (Rabbit).